The chain runs to 129 residues: 3-aminoacrylate deaminase RutC (129 aa).

This sequence belongs to the RutC family.

It carries out the reaction (Z)-3-aminoacrylate + H2O + H(+) = 3-oxopropanoate + NH4(+). In terms of biological role, involved in pyrimidine catabolism. Catalyzes the deamination of 3-aminoacrylate to malonic semialdehyde, a reaction that can also occur spontaneously. RutC may facilitate the reaction and modulate the metabolic fitness, rather than catalyzing essential functions. The sequence is that of 3-aminoacrylate deaminase RutC from Caulobacter segnis (strain ATCC 21756 / DSM 7131 / JCM 7823 / NBRC 15250 / LMG 17158 / TK0059) (Mycoplana segnis).